Here is a 178-residue protein sequence, read N- to C-terminus: Caveolin-1 (178 aa).

N-acetylserine is present on Ser-2. Ser-2 is subject to Phosphoserine. Residues 2–94 (SGGKYVDSEG…WKASFTTFTV (93 aa)) form a required for homooligomerization region. At 2–104 (SGGKYVDSEG…TKYWFYRLLS (103 aa)) the chain is on the cytoplasmic side. Lys-5 is modified (N6-acetyllysine; alternate). A Glycyl lysine isopeptide (Lys-Gly) (interchain with G-Cter in ubiquitin); alternate cross-link involves residue Lys-5. Tyr-6 carries the post-translational modification Phosphotyrosine. Ser-9 is modified (phosphoserine). At Tyr-14 the chain carries Phosphotyrosine; by ABL1. Tyr-25 carries the phosphotyrosine modification. Glycyl lysine isopeptide (Lys-Gly) (interchain with G-Cter in ubiquitin) cross-links involve residues Lys-26 and Lys-30. Phosphoserine is present on Ser-37. Residues Lys-39, Lys-47, and Lys-57 each participate in a glycyl lysine isopeptide (Lys-Gly) (interchain with G-Cter in ubiquitin) cross-link. Positions 82–94 (DGIWKASFTTFTV) are interaction with CAVIN3. The segment at residues 105 to 125 (ALFGIPMALIWGIYFAILSFL) is an intramembrane region (helical). The Cytoplasmic portion of the chain corresponds to 126–178 (HIWAVVPCIKSFLIEIQCISRVYSIYVHTVCDPLFEAVGKIFSNVRINLQKEI). The tract at residues 131-142 (VPCIKSFLIEIQ) is interacts with SPRY1, SPRY2, SPRY3 and SPRY4. Residues Cys-133, Cys-143, and Cys-156 are each lipidated (S-palmitoyl cysteine). An interacts with SPRY1, SPRY2, and SPRY4 region spans residues 149–160 (SIYVHTVCDPLF). Residues 167–178 (FSNVRINLQKEI) are interacts with SPRY1, SPRY2, SPRY3 and SPRY4.

It belongs to the caveolin family. In terms of assembly, homooligomer. Interacts (via the N-terminus) with DPP4; the interaction is direct. Forms a stable heterooligomeric complex with CAV2 that targets to lipid rafts and drives caveolae formation. Interacts with PACSIN2; this interaction induces membrane tubulation. Interacts with BMX, BTK, CTNNB1, CDH1, GLIPR2, JUP, NOSTRIN, SNAP25 and STX1A. Interacts with SLC7A9. Interacts with TGFBR1. Interacts with CAVIN3 (via leucine-zipper domain) in a cholesterol-sensitive manner. Interacts with CAVIN1. Interacts with EHD2 in a cholesterol-dependent manner. Forms a ternary complex with UBXN6 and VCP; mediates CAV1 targeting to lysosomes for degradation. Interacts with ABCG1; this interaction regulates ABCG1-mediated cholesterol efflux. Interacts with NEU3; this interaction enhances NEU3 sialidase activity within caveola. Interacts (via C-terminus) with SPRY1, SPRY2 (via C-terminus), SPRY3, and SPRY4. Interacts with IGFBP5; this interaction allows trafficking of IGFBP5 from the plasma membrane to the nucleus. In terms of processing, phosphorylated at Tyr-14 by ABL1 in response to oxidative stress. Post-translationally, ubiquitinated. Undergo monoubiquitination and multi- and/or polyubiquitination. Monoubiquitination of N-terminal lysines promotes integration in a ternary complex with UBXN6 and VCP which promotes oligomeric CAV1 targeting to lysosomes for degradation. Ubiquitinated by ZNRF1; leading to degradation and modulation of the TLR4-mediated immune response.

It localises to the golgi apparatus membrane. The protein resides in the cell membrane. It is found in the membrane. The protein localises to the caveola. Its subcellular location is the membrane raft. In terms of biological role, may act as a scaffolding protein within caveolar membranes. Forms a stable heterooligomeric complex with CAV2 that targets to lipid rafts and drives caveolae formation. Mediates the recruitment of CAVIN proteins (CAVIN1/2/3/4) to the caveolae. Interacts directly with G-protein alpha subunits and can functionally regulate their activity. Involved in the costimulatory signal essential for T-cell receptor (TCR)-mediated T-cell activation. Its binding to DPP4 induces T-cell proliferation and NF-kappa-B activation in a T-cell receptor/CD3-dependent manner. Recruits CTNNB1 to caveolar membranes and may regulate CTNNB1-mediated signaling through the Wnt pathway. Negatively regulates TGFB1-mediated activation of SMAD2/3 by mediating the internalization of TGFBR1 from membrane rafts leading to its subsequent degradation. Binds 20(S)-hydroxycholesterol (20(S)-OHC). The chain is Caveolin-1 (CAV1) from Chlorocebus aethiops (Green monkey).